The sequence spans 180 residues: MIIAITGTPGVGKTTVARKLAEKLGCKYVNLRDFALEKGIGEVKGDELEVEVDELAYFVEKEFKGKNVVLDGHLSHLMPADLVIVLRAHPKTIAERLKERGYSKDKIGENVEAELVDVILIEALDEHENVIEVDTTGKTPEEVVNEILNLINSGIKRRVGIVDWTKVYEEIIPYLRLGGD.

Gly10, Gly12, Lys13, Thr14, and Thr15 together coordinate ATP. The segment at 30-50 (NLRDFALEKGIGEVKGDELEV) is NMP. Residues 99–109 (ERGYSKDKIGE) are LID. Positions 100 and 138 each coordinate ATP.

It belongs to the adenylate kinase family. AK6 subfamily. Interacts with uS11. Not a structural component of 40S pre-ribosomes, but transiently interacts with them by binding to uS11.

The enzyme catalyses AMP + ATP = 2 ADP. It carries out the reaction ATP + H2O = ADP + phosphate + H(+). In terms of biological role, broad-specificity nucleoside monophosphate (NMP) kinase that catalyzes the reversible transfer of the terminal phosphate group between nucleoside triphosphates and monophosphates. Also has ATPase activity. Involved in the late maturation steps of the 30S ribosomal particles, specifically 16S rRNA maturation. While NMP activity is not required for ribosome maturation, ATPase activity is. Associates transiently with small ribosomal subunit protein uS11. ATP hydrolysis breaks the interaction with uS11. May temporarily remove uS11 from the ribosome to enable a conformational change of the ribosomal RNA that is needed for the final maturation step of the small ribosomal subunit. In Pyrococcus furiosus (strain ATCC 43587 / DSM 3638 / JCM 8422 / Vc1), this protein is Putative adenylate kinase.